The sequence spans 918 residues: Dual serine/threonine and tyrosine protein kinase (918 aa).

The segment covering Met1–Asn19 has biased composition (basic and acidic residues). The tract at residues Met1–Ser29 is disordered. The Protein kinase domain maps to Pro643–Leu897. ATP-binding positions include Leu649–Val657 and Lys672. Asp768 (proton acceptor) is an active-site residue.

It belongs to the protein kinase superfamily. Ser/Thr protein kinase family.

The protein resides in the cytoplasm. Its subcellular location is the cell membrane. It is found in the apical cell membrane. The protein localises to the basolateral cell membrane. It localises to the cell junction. The enzyme catalyses L-seryl-[protein] + ATP = O-phospho-L-seryl-[protein] + ADP + H(+). It carries out the reaction L-threonyl-[protein] + ATP = O-phospho-L-threonyl-[protein] + ADP + H(+). It catalyses the reaction L-tyrosyl-[protein] + ATP = O-phospho-L-tyrosyl-[protein] + ADP + H(+). Functionally, may act as a positive regulator of ERK phosphorylation downstream of fibroblast growth factor-receptor activation. May induce both caspase-dependent apoptosis and caspase-independent cell death. May play a role in the embryonic development. In Xenopus tropicalis (Western clawed frog), this protein is Dual serine/threonine and tyrosine protein kinase (dstyk).